We begin with the raw amino-acid sequence, 180 residues long: Large ribosomal subunit protein uL5 (180 aa).

The protein belongs to the universal ribosomal protein uL5 family. As to quaternary structure, forms a bridge to the 30S subunit in the 70S ribosome. Part of the 50S ribosomal subunit; part of the 5S rRNA/L5/L18/L25 (CTC) subcomplex. Is known to contact the 5S rRNA, 23S rRNA and the P site tRNA.

This is one of the proteins that bind and probably mediate the attachment of the 5S RNA into the large ribosomal subunit, where it forms part of the central protuberance. In the 70S ribosome it contacts protein S13 of the 30S subunit (bridge B1b), connecting the 2 subunits; this bridge is implicated in subunit movement. Contacts the P site tRNA; the 5S rRNA and some of its associated proteins might help stabilize positioning of ribosome-bound tRNAs. This chain is Large ribosomal subunit protein uL5 (rplE), found in Deinococcus radiodurans (strain ATCC 13939 / DSM 20539 / JCM 16871 / CCUG 27074 / LMG 4051 / NBRC 15346 / NCIMB 9279 / VKM B-1422 / R1).